The primary structure comprises 397 residues: Putative galactokinase (397 aa).

Residue Ser78 participates in ATP binding. The active-site Proton acceptor is the Asp182.

The protein belongs to the GHMP kinase family. GalK subfamily.

The protein resides in the cytoplasm. It catalyses the reaction alpha-D-galactose + ATP = alpha-D-galactose 1-phosphate + ADP + H(+). Its pathway is carbohydrate metabolism; galactose metabolism. Its function is as follows. Catalyzes the transfer of the gamma-phosphate of ATP to D-galactose to form alpha-D-galactose-1-phosphate (Gal-1-P). This Treponema pallidum (strain Nichols) protein is Putative galactokinase (galK).